We begin with the raw amino-acid sequence, 416 residues long: (S)-ureidoglycine--glyoxylate transaminase (416 aa).

Residue K198 is modified to N6-(pyridoxal phosphate)lysine.

The protein belongs to the class-V pyridoxal-phosphate-dependent aminotransferase family. Homodimer. It depends on pyridoxal 5'-phosphate as a cofactor.

The enzyme catalyses (S)-2-ureidoglycine + glyoxylate = N-carbamoyl-2-oxoglycine + glycine. The protein operates within nitrogen metabolism; (S)-allantoin degradation. Its function is as follows. Catalyzes the transamination between an unstable intermediate ((S)-ureidoglycine) and the end product of purine catabolism (glyoxylate) to yield oxalurate and glycine. Glyoxylate is the preferred substrate, but other amino-group acceptors can be used. This chain is (S)-ureidoglycine--glyoxylate transaminase, found in Bacillus subtilis (strain 168).